A 317-amino-acid polypeptide reads, in one-letter code: MAELACFCYPHLENDSYKFIPFNSLAIKCMLTAKVDKKDQDKFYNSIIYGIAPPPQFKKRYNTNDNSRGMNYETSMFNKVAILICEALNSIRVTQSDVANVLSRVVSVRHLENLVLRKENHQDVLFHSKELLLKAVLIAIGQSKEIETTATAEGGEIVFQNAAFTMWKLTYLDHKLMPILDQNFIEYKITLNEDKPISDICVKELVAELRWQYNRFAVITHGKGHYRVIKYSSVANHADRVFATYKNNAKSGNVTDFNLLDQRIIWQNWYAFTSSMKQGNTLDVCKKLLFQKMKQEKNPFKGLSTDRKMDEVSHVGI.

ATP-binding positions include 107-109 (SVR), Lys-188, and 221-223 (HGK). An RNA-binding region spans residues 205–241 (LVAELRWQYNRFAVITHGKGHYRVIKYSSVANHADRV). His-225 serves as the catalytic For NTPase and RTPase activities. Residue Arg-227 participates in ATP binding.

The protein belongs to the rotavirus NSP2 family. In terms of assembly, homooctamer. Interacts with VP1; this interaction is weak. Interacts with NSP5; this interaction leads to up-regulation of NSP5 phosphorylation and formation of viral factories. Interacts with host DCP1A, DCP1B, DDX6, EDC4 and EIF2S1/eIF2-alpha; these interactions are probably part of the sequestration of some host SGs and PBs proteins in viral factories. Mg(2+) serves as cofactor.

It localises to the host cytoplasm. Functionally, participates in replication and packaging of the viral genome. Plays a crucial role, together with NSP5, in the formation of virus factories (viroplasms), which are large inclusions in the host cytoplasm where replication intermediates are assembled and viral RNA replication takes place. Displays ssRNA binding, NTPase, RNA triphosphatase (RTPase) and ATP-independent helix-unwinding activities. The unwinding activity may prepare and organize plus-strand RNAs for packaging and replication by removing interfering secondary structures. The RTPase activity plays a role in the removal of the gamma-phosphate from the rotavirus RNA minus strands of dsRNA genome segments. Participates in the selective exclusion of host proteins from stress granules (SG) and P bodies (PB). Also participates in the sequestration of these remodeled organelles in viral factories. This chain is Non-structural protein 2, found in Homo sapiens (Human).